The primary structure comprises 401 residues: Putative TRAP transporter large permease protein HI_0050 (401 aa).

The next 11 membrane-spanning stretches (helical) occupy residues 31 to 51 (FPLM…HGGI), 70 to 90 (LGYV…SAVA), 115 to 135 (GLIC…PMII), 144 to 164 (ITKL…GLWV), 193 to 213 (AFWP…GIFT), 217 to 237 (AGVV…GLTF), 253 to 273 (MVMF…VAQI), 290 to 310 (ILMF…DLIP), 330 to 350 (IAYF…TPPV), 353 to 373 (VLYV…KGIA), and 375 to 395 (FLFV…IVIV).

Belongs to the TRAP transporter large permease family.

It localises to the cell inner membrane. This Haemophilus influenzae (strain ATCC 51907 / DSM 11121 / KW20 / Rd) protein is Putative TRAP transporter large permease protein HI_0050.